The sequence spans 234 residues: Eukaryotic translation initiation factor 3 subunit K (234 aa).

Positions 46-219 (SDIEANLALL…EAKPATTTES (174 aa)) constitute a PCI domain.

The protein belongs to the eIF-3 subunit K family. As to quaternary structure, component of the eukaryotic translation initiation factor 3 (eIF-3) complex.

Its subcellular location is the cytoplasm. In terms of biological role, component of the eukaryotic translation initiation factor 3 (eIF-3) complex, which is involved in protein synthesis of a specialized repertoire of mRNAs and, together with other initiation factors, stimulates binding of mRNA and methionyl-tRNAi to the 40S ribosome. The eIF-3 complex specifically targets and initiates translation of a subset of mRNAs involved in cell proliferation. The protein is Eukaryotic translation initiation factor 3 subunit K of Yarrowia lipolytica (strain CLIB 122 / E 150) (Yeast).